A 1151-amino-acid chain; its full sequence is Phospholipid-transporting ATPase NEO1 (1151 aa).

Disordered stretches follow at residues 1 to 21 (MPNP…NNNQ) and 73 to 95 (LDNF…THPL). The Extracellular portion of the chain corresponds to 1-184 (MPNPPSFKSH…LSNAKYNAVT (184 aa)). Polar residues predominate over residues 12 to 21 (QNLFNSNNNQ). The required for endosome-to-Golgi sorting stretch occupies residues 51–104 (EPLSKHNTVGDRESFEMRTVDDLDNFSNHSSDSHRKSSNTDTHPLMYDNRLSQD). Phosphoserine is present on Ser-102. A helical transmembrane segment spans residues 185 to 205 (FVPTLLYEQFKFFYNLYFLVV). At 206-209 (ALSQ) the chain is on the cytoplasmic side. A helical transmembrane segment spans residues 210-230 (AVPALRIGYLSSYIVPLAFVL). At 231 to 367 (TVTMAKEAID…TSNPLSVDNT (137 aa)) the chain is on the extracellular side. Residues 368–388 (LWANTVLASSGFCIACVVYTG) form a helical membrane-spanning segment. The Cytoplasmic segment spans residues 389 to 416 (RDTRQAMNTTTAKVKTGLLELEINSISK). A helical transmembrane segment spans residues 417 to 437 (ILCACVFALSILLVAFAGFHN). A topological domain (extracellular) is located at residue Asp-438. Residues 439–459 (DWYIDILRYLILFSTIIPVSL) form a helical membrane-spanning segment. Residues 460–947 (RVNLDLAKSV…KLAQFVMHRG (488 aa)) are Cytoplasmic-facing. The 4-aspartylphosphate intermediate role is filled by Asp-503. 3 residues coordinate ATP: Asp-503, Lys-504, and Thr-505. Mg(2+) is bound at residue Asp-503. Thr-505 is a binding site for Mg(2+). Residue Ser-551 is modified to Phosphoserine. ATP contacts are provided by Glu-597, Phe-640, Ser-642, Lys-645, Lys-664, Arg-693, Thr-694, Thr-774, Gly-775, Asp-776, Arg-856, and Lys-862. Position 882 (Asp-882) interacts with Mg(2+). 2 residues coordinate ATP: Asn-885 and Asp-886. A Mg(2+)-binding site is contributed by Asp-886. Residues 948–968 (LIIAICQAVYSICSLFEPIAL) traverse the membrane as a helical segment. At 969–970 (YQ) the chain is on the extracellular side. Residues 971-991 (GWLMVGYATCYTMAPVFSLTL) form a helical membrane-spanning segment. Residues 992-1020 (DHDIEESLTKIYPELYKELTEGKSLSYKT) lie on the Cytoplasmic side of the membrane. Residues 1021–1041 (FFVWVLLSLFQGSVIQLFSQA) traverse the membrane as a helical segment. Over 1042-1052 (FTSLLDTDFTR) the chain is Extracellular. A helical transmembrane segment spans residues 1053 to 1073 (MVAISFTALVVNELIMVALEI). At 1074–1078 (YTWNK) the chain is on the cytoplasmic side. The helical transmembrane segment at 1079-1099 (TMLVTEIATLLFYIVSVPFLG) threads the bilayer. At 1100–1109 (DYFDLGYMTT) the chain is on the extracellular side. Residues 1110-1130 (VNYYAGLLVILLISIFPVWTA) form a helical membrane-spanning segment. The Cytoplasmic segment spans residues 1131–1151 (KAIYRRLHPPSYAKVQEFATP). The required for endosomal targeting stretch occupies residues 1131-1151 (KAIYRRLHPPSYAKVQEFATP).

The protein belongs to the cation transport ATPase (P-type) (TC 3.A.3) family. Type IV subfamily. In terms of assembly, interacts with MON2. Interacts with ANY1. Functions without a CDC50/LEM3 family accessory subunit. Mg(2+) is required as a cofactor.

It is found in the endosome membrane. It localises to the golgi apparatus membrane. It carries out the reaction ATP + H2O + phospholipidSide 1 = ADP + phosphate + phospholipidSide 2.. The enzyme catalyses a 1,2-diacyl-sn-glycero-3-phospho-L-serine(out) + ATP + H2O = a 1,2-diacyl-sn-glycero-3-phospho-L-serine(in) + ADP + phosphate + H(+). The catalysed reaction is a 1,2-diacyl-sn-glycero-3-phosphoethanolamine(out) + ATP + H2O = a 1,2-diacyl-sn-glycero-3-phosphoethanolamine(in) + ADP + phosphate + H(+). Flippase that catalyzes the hydrolysis of ATP coupled to the transport of lysophosphatidylserine, phosphatidylethanolamine, and phosphatidylserine from the lumenal to the cytosolic leaflet of the Golgi apparatus membrane and ensures the maintenance of asymmetric distribution of phospholipids. Does not appear to transport phosphatidylcholine or sphingomyelin. May be involved in recycling from endosomes by driving the formation of SNX3-dependent recycling tubules. Required for COPI retrograde transport from the Golgi to the endoplasmic reticulum, Golgi-endosome trafficking, and Golgi-dependent protein glycosylation. The protein is Phospholipid-transporting ATPase NEO1 of Saccharomyces cerevisiae (strain ATCC 204508 / S288c) (Baker's yeast).